The sequence spans 473 residues: Lactate utilization protein B (473 aa).

4Fe-4S ferredoxin-type domains follow at residues 303–333 (GTAF…GHSY) and 352–381 (YDDY…LHEL). Positions 312, 315, 318, 322, 365, 368, and 372 each coordinate [4Fe-4S] cluster.

It belongs to the LutB/YkgF family.

In terms of biological role, is involved in L-lactate degradation and allows cells to grow with lactate as the sole carbon source. Has probably a role as an electron transporter during oxidation of L-lactate. This chain is Lactate utilization protein B, found in Bacillus pumilus (strain SAFR-032).